Here is a 379-residue protein sequence, read N- to C-terminus: Dual-specificity RNA methyltransferase RlmN (379 aa).

The active-site Proton acceptor is Glu95. In terms of domain architecture, Radical SAM core spans 101–345 (EETRGTLCVS…TTVRKTRGDD (245 aa)). An intrachain disulfide couples Cys108 to Cys350. Positions 115, 119, and 122 each coordinate [4Fe-4S] cluster. S-adenosyl-L-methionine contacts are provided by residues 176 to 177 (GE), Ser208, 230 to 232 (SLH), and Asn307. The active-site S-methylcysteine intermediate is the Cys350.

It belongs to the radical SAM superfamily. RlmN family. The cofactor is [4Fe-4S] cluster.

Its subcellular location is the cytoplasm. The enzyme catalyses adenosine(2503) in 23S rRNA + 2 reduced [2Fe-2S]-[ferredoxin] + 2 S-adenosyl-L-methionine = 2-methyladenosine(2503) in 23S rRNA + 5'-deoxyadenosine + L-methionine + 2 oxidized [2Fe-2S]-[ferredoxin] + S-adenosyl-L-homocysteine. It carries out the reaction adenosine(37) in tRNA + 2 reduced [2Fe-2S]-[ferredoxin] + 2 S-adenosyl-L-methionine = 2-methyladenosine(37) in tRNA + 5'-deoxyadenosine + L-methionine + 2 oxidized [2Fe-2S]-[ferredoxin] + S-adenosyl-L-homocysteine. Its function is as follows. Specifically methylates position 2 of adenine 2503 in 23S rRNA and position 2 of adenine 37 in tRNAs. m2A2503 modification seems to play a crucial role in the proofreading step occurring at the peptidyl transferase center and thus would serve to optimize ribosomal fidelity. This Burkholderia lata (strain ATCC 17760 / DSM 23089 / LMG 22485 / NCIMB 9086 / R18194 / 383) protein is Dual-specificity RNA methyltransferase RlmN.